A 354-amino-acid polypeptide reads, in one-letter code: Carbamoyl phosphate synthase small chain (354 aa).

The CPSase stretch occupies residues 1–167 (MEAVLILEDG…KEPKIHKTAN (167 aa)). Residues S45, G219, and G221 each contribute to the L-glutamine site. In terms of domain architecture, Glutamine amidotransferase type-1 spans 171 to 354 (RCVLIDCGVK…DEMIKLKDRK (184 aa)). The active-site Nucleophile is the C246. L-glutamine is bound by residues L247, Q250, N288, G290, and F291. Catalysis depends on residues H330 and E332.

The protein belongs to the CarA family. In terms of assembly, composed of two chains; the small (or glutamine) chain promotes the hydrolysis of glutamine to ammonia, which is used by the large (or ammonia) chain to synthesize carbamoyl phosphate. Tetramer of heterodimers (alpha,beta)4.

It catalyses the reaction hydrogencarbonate + L-glutamine + 2 ATP + H2O = carbamoyl phosphate + L-glutamate + 2 ADP + phosphate + 2 H(+). The catalysed reaction is L-glutamine + H2O = L-glutamate + NH4(+). The protein operates within amino-acid biosynthesis; L-arginine biosynthesis; carbamoyl phosphate from bicarbonate: step 1/1. It participates in pyrimidine metabolism; UMP biosynthesis via de novo pathway; (S)-dihydroorotate from bicarbonate: step 1/3. In terms of biological role, small subunit of the glutamine-dependent carbamoyl phosphate synthetase (CPSase). CPSase catalyzes the formation of carbamoyl phosphate from the ammonia moiety of glutamine, carbonate, and phosphate donated by ATP, constituting the first step of 2 biosynthetic pathways, one leading to arginine and/or urea and the other to pyrimidine nucleotides. The small subunit (glutamine amidotransferase) binds and cleaves glutamine to supply the large subunit with the substrate ammonia. In Methanocaldococcus jannaschii (strain ATCC 43067 / DSM 2661 / JAL-1 / JCM 10045 / NBRC 100440) (Methanococcus jannaschii), this protein is Carbamoyl phosphate synthase small chain.